Consider the following 138-residue polypeptide: Large ribosomal subunit protein uL16 (138 aa).

The protein belongs to the universal ribosomal protein uL16 family. In terms of assembly, part of the 50S ribosomal subunit.

Its function is as follows. Binds 23S rRNA and is also seen to make contacts with the A and possibly P site tRNAs. The chain is Large ribosomal subunit protein uL16 from Acidiphilium cryptum (strain JF-5).